The sequence spans 270 residues: (+)-cis,cis-nepetalactol synthase NEPS3 (270 aa).

NAD(+) is bound by residues 21–27 (GGASGIG), 46–48 (DIQ), 70–71 (DV), N97, 165–169 (YVMSK), and 198–202 (VATPL).

This sequence belongs to the short-chain dehydrogenases/reductases (SDR) family. As to quaternary structure, forms homotetramers.

It carries out the reaction (S)-8-oxocitronellyl enol = cis-cis-nepetalactol. Functions as a non-oxidoreductive cyclase to promote the formation of cis-cis-nepetalactol. Cis-cis-nepetalactol is then oxidized by NEPS1 into cis-cis-nepetalactone, which belongs to a family of metabolites that are both insect-repellent and have euphoric effect in cats. Binds NAD(+) as classical short-chain dehydrogenase/reductase (SDR), but does not utilize it for its redox-neutral cyclase activity. The sequence is that of (+)-cis,cis-nepetalactol synthase NEPS3 from Nepeta racemosa (Catmint).